Consider the following 415-residue polypeptide: Serine hydroxymethyltransferase (415 aa).

(6S)-5,6,7,8-tetrahydrofolate-binding positions include Leu117 and 121–123 (GHL). Lys226 carries the post-translational modification N6-(pyridoxal phosphate)lysine. (6S)-5,6,7,8-tetrahydrofolate-binding positions include Glu241 and 349–351 (SPF).

This sequence belongs to the SHMT family. In terms of assembly, homodimer. Pyridoxal 5'-phosphate is required as a cofactor.

The protein resides in the cytoplasm. The enzyme catalyses (6R)-5,10-methylene-5,6,7,8-tetrahydrofolate + glycine + H2O = (6S)-5,6,7,8-tetrahydrofolate + L-serine. The protein operates within one-carbon metabolism; tetrahydrofolate interconversion. Its pathway is amino-acid biosynthesis; glycine biosynthesis; glycine from L-serine: step 1/1. Its function is as follows. Catalyzes the reversible interconversion of serine and glycine with tetrahydrofolate (THF) serving as the one-carbon carrier. This reaction serves as the major source of one-carbon groups required for the biosynthesis of purines, thymidylate, methionine, and other important biomolecules. Also exhibits THF-independent aldolase activity toward beta-hydroxyamino acids, producing glycine and aldehydes, via a retro-aldol mechanism. This Geobacter sulfurreducens (strain ATCC 51573 / DSM 12127 / PCA) protein is Serine hydroxymethyltransferase.